The sequence spans 344 residues: Oxygen sensor histidine kinase NreB (344 aa).

4 residues coordinate [4Fe-4S] cluster: Cys58, Cys61, Cys73, and Cys76. The region spanning 147–344 (ENERKRISRE…GTIITLDIPI (198 aa)) is the Histidine kinase domain. Phosphohistidine; by autocatalysis is present on His158.

It depends on [4Fe-4S] cluster as a cofactor. In terms of processing, autophosphorylated.

It is found in the cytoplasm. The enzyme catalyses ATP + protein L-histidine = ADP + protein N-phospho-L-histidine.. In terms of biological role, member of the two-component regulatory system NreB/NreC involved in the control of dissimilatory nitrate/nitrite reduction in response to oxygen. NreB functions as a direct oxygen sensor histidine kinase which is autophosphorylated, in the absence of oxygen, probably at the conserved histidine residue, and transfers its phosphate group probably to a conserved aspartate residue of NreC. NreB/NreC activates the expression of the nitrate (narGHJI) and nitrite (nir) reductase operons, as well as the putative nitrate transporter gene narT. The protein is Oxygen sensor histidine kinase NreB (nreB) of Staphylococcus epidermidis (strain ATCC 12228 / FDA PCI 1200).